We begin with the raw amino-acid sequence, 59 residues long: Large ribosomal subunit protein uL30 (59 aa).

It belongs to the universal ribosomal protein uL30 family. In terms of assembly, part of the 50S ribosomal subunit.

The protein is Large ribosomal subunit protein uL30 of Erwinia tasmaniensis (strain DSM 17950 / CFBP 7177 / CIP 109463 / NCPPB 4357 / Et1/99).